A 377-amino-acid polypeptide reads, in one-letter code: Cyclin-I (377 aa).

A disordered region spans residues D357–M377. A compositionally biased stretch (pro residues) spans P367–M377.

The protein belongs to the cyclin family. In terms of tissue distribution, highest levels in adult heart, brain and skeletal muscle. Lower levels in adult placenta, lung, kidney and pancreas. Also high levels in fetal brain and lower levels in fetal lung, liver and kidney. Also abundant in testis and thyroid.

Its subcellular location is the nucleus membrane. This Homo sapiens (Human) protein is Cyclin-I.